The chain runs to 1132 residues: Tyrosine-protein kinase JAK2 (1132 aa).

An interaction with cytokine/interferon/growth hormone receptors region spans residues 1-239; that stretch reads MGMACLTMTE…RYRFRRFIQQ (239 aa). Residues 37-380 enclose the FERM domain; it reads PVLQVYLYHS…GYYRLTADAH (344 aa). Residue Y119 is modified to Phosphotyrosine; by autocatalysis. Residues Y372 and Y373 each carry the phosphotyrosine modification. The SH2; atypical domain occupies 401–482; that stretch reads HGPISMDFAI…SLKDLLNCYQ (82 aa). Residue S523 is modified to Phosphoserine. A Protein kinase 1 domain is found at 545 to 809; it reads LIFNESLGQG…AVIRDLNSLF (265 aa). 2 positions are modified to phosphotyrosine: Y570 and Y813. Positions 849–1126 constitute a Protein kinase 2 domain; it reads LKFLQQLGKG…RDLSLRVDQI (278 aa). Residue 855-863 coordinates ATP; the sequence is LGKGNFGSV. Y868 bears the Phosphotyrosine; by autocatalysis mark. K882 contacts ATP. Residues Y966 and Y972 each carry the phosphotyrosine; by autocatalysis modification. The active-site Proton acceptor is the D976. Phosphotyrosine; by autocatalysis is present on residues Y1007 and Y1008.

The protein belongs to the protein kinase superfamily. Tyr protein kinase family. JAK subfamily. In terms of assembly, interacts with IL23R, SKB1 and STAM2. Interacts with EPOR. Interacts with LYN. Interacts with SIRPA. Interacts with SH2B1. Interacts with TEC. Interacts with IFNGR2 (via intracellular domain). Interacts with LEPR (Isoform B). Interacts with HSP90AB1; promotes functional activation in a heat shock-dependent manner. Interacts with STRA6. Interacts with ASB2; the interaction targets JAK2 for Notch-induced proteasomal degradation. Requires Mg(2+) as cofactor. In terms of processing, autophosphorylated, leading to regulate its activity. Leptin promotes phosphorylation on tyrosine residues, including phosphorylation on Tyr-813. Autophosphorylation on Tyr-119 in response to EPO down-regulates its kinase activity. Autophosphorylation on Tyr-868, Tyr-966 and Tyr-972 in response to growth hormone (GH) are required for maximal kinase activity. Also phosphorylated by TEC. Phosphorylated on tyrosine residues in response to interferon gamma signaling. Phosphorylated on tyrosine residues in response to a signaling cascade that is activated by increased cellular retinol. Undergoes Notch-induced ubiquitination and subsequent proteasomal degradation which is mediated by ASB1 or ASB2, the substrate-recognition components of probable ECS E3 ubiquitin-protein ligase complexes. Ubiquitously expressed throughout most tissues.

It localises to the endomembrane system. The protein localises to the cytoplasm. Its subcellular location is the nucleus. The catalysed reaction is L-tyrosyl-[protein] + ATP = O-phospho-L-tyrosyl-[protein] + ADP + H(+). Regulated by autophosphorylation, can both activate or decrease activity. Heme regulates its activity by enhancing the phosphorylation on Tyr-1007 and Tyr-1008. Non-receptor tyrosine kinase involved in various processes such as cell growth, development, differentiation or histone modifications. Mediates essential signaling events in both innate and adaptive immunity. In the cytoplasm, plays a pivotal role in signal transduction via its association with type I receptors such as growth hormone (GHR), prolactin (PRLR), leptin (LEPR), erythropoietin (EPOR), thrombopoietin (THPO); or type II receptors including IFN-alpha, IFN-beta, IFN-gamma and multiple interleukins. Following ligand-binding to cell surface receptors, phosphorylates specific tyrosine residues on the cytoplasmic tails of the receptor, creating docking sites for STATs proteins. Subsequently, phosphorylates the STATs proteins once they are recruited to the receptor. Phosphorylated STATs then form homodimer or heterodimers and translocate to the nucleus to activate gene transcription. For example, cell stimulation with erythropoietin (EPO) during erythropoiesis leads to JAK2 autophosphorylation, activation, and its association with erythropoietin receptor (EPOR) that becomes phosphorylated in its cytoplasmic domain. Then, STAT5 (STAT5A or STAT5B) is recruited, phosphorylated and activated by JAK2. Once activated, dimerized STAT5 translocates into the nucleus and promotes the transcription of several essential genes involved in the modulation of erythropoiesis. Part of a signaling cascade that is activated by increased cellular retinol and that leads to the activation of STAT5 (STAT5A or STAT5B). In addition, JAK2 mediates angiotensin-2-induced ARHGEF1 phosphorylation. Plays a role in cell cycle by phosphorylating CDKN1B. Cooperates with TEC through reciprocal phosphorylation to mediate cytokine-driven activation of FOS transcription. In the nucleus, plays a key role in chromatin by specifically mediating phosphorylation of 'Tyr-41' of histone H3 (H3Y41ph), a specific tag that promotes exclusion of CBX5 (HP1 alpha) from chromatin. Up-regulates the potassium voltage-gated channel activity of KCNA3. In Rattus norvegicus (Rat), this protein is Tyrosine-protein kinase JAK2.